The chain runs to 201 residues: MDLVSIILISIGLSMDAFAVSITNGAMISKVTASEGIRIGLFFGGFQALMPLIGWSIGIKFESYIAALDHWIALILLSIIGGKMIYDSIKENRDNKDEIACDYAVGEKKCLNNKTLTLLAIATSIDALAIGVSFAFLKVSIINTIIIIGSITFVICFIGVMIGKKCGKLLKKRAEILGGIVLIFIGIKIFIEHTNILSKIF.

The next 6 membrane-spanning stretches (helical) occupy residues 3-23, 39-59, 65-85, 116-136, 141-161, and 176-196; these read LVSIILISIGLSMDAFAVSIT, IGLFFGGFQALMPLIGWSIGI, IAALDHWIALILLSIIGGKMI, LTLLAIATSIDALAIGVSFAF, IINTIIIIGSITFVICFIGVM, and ILGGIVLIFIGIKIFIEHTNI.

Belongs to the MntP (TC 9.B.29) family.

Its subcellular location is the cell membrane. Its function is as follows. Probably functions as a manganese efflux pump. This chain is Putative manganese efflux pump MntP, found in Clostridium botulinum (strain Loch Maree / Type A3).